The primary structure comprises 258 residues: Glutamate racemase (258 aa).

Residues 12-13 and 44-45 contribute to the substrate site; these read DS and YG. C75 (proton donor/acceptor) is an active-site residue. 76-77 is a substrate binding site; that stretch reads NT. The active-site Proton donor/acceptor is C186. 187 to 188 contacts substrate; it reads TH.

The protein belongs to the aspartate/glutamate racemases family.

The catalysed reaction is L-glutamate = D-glutamate. The protein operates within cell wall biogenesis; peptidoglycan biosynthesis. Provides the (R)-glutamate required for cell wall biosynthesis. This chain is Glutamate racemase, found in Clostridium botulinum (strain Alaska E43 / Type E3).